The sequence spans 751 residues: Fusarisetin A cluster transcription factor fsa6 (751 aa).

Positions 1–35 are disordered; it reads MADQAQDVRPTEWGPGKTPQGRARLPSSRPREKPQ. The zn(2)-C6 fungal-type DNA-binding region spans 38–66; it reads CNLCRRRKLRCDRQRPCSSCAQRELGLSC. Positions 107 to 116 are enriched in polar residues; that stretch reads NVNAQDQVGA. A disordered region spans residues 107-153; it reads NVNAQDQVGATPSPRGQPRGPDYPTPAAVHAPSTNEEPVSAAVSPAD.

It localises to the nucleus. Its function is as follows. Transcription factor that regulates the expression of the gene cluster that mediates the biosynthesis of fusarisetin A. The chain is Fusarisetin A cluster transcription factor fsa6 from Fusarium sp. (strain FN080326).